Consider the following 977-residue polypeptide: Kinesin-like protein KIN-7L, chloroplastic (977 aa).

Residues 1–12 (MGSKQVSKTRNG) are compositionally biased toward polar residues. Residues 1 to 66 (MGSKQVSKTR…PPKPLQSKEN (66 aa)) are disordered. Low complexity-rich tracts occupy residues 22–31 (SSASSTTSSS) and 38–54 (SVDS…RSKP). Residues 66-385 (NVTVTVRFRP…LKFAHRAKHI (320 aa)) form the Kinesin motor domain. 146–153 (GVTSSGKT) provides a ligand contact to ATP. Residues 386 to 471 (EIQAAQNKII…LTKLILVSNK (86 aa)) adopt a coiled-coil conformation. A disordered region spans residues 549-589 (DSSLGGSSLSDKSSAVKSNSTPSTPQGEGSDFHTESRLSEG). Residues 551–561 (SLGGSSLSDKS) show a composition bias toward low complexity. The segment covering 563-575 (AVKSNSTPSTPQG) has biased composition (polar residues). Coiled-coil stretches lie at residues 626–688 (MEIL…GKQI) and 732–942 (IQEQ…LENE). A compositionally biased stretch (polar residues) spans 864–876 (SSVTTPQGKTGNL). 2 disordered regions span residues 864–891 (SSVT…KEQE) and 958–977 (AANS…HFGT). Basic and acidic residues predominate over residues 879-891 (GRRESVSKRKEQE). Polar residues predominate over residues 958–967 (AANSGLSDSV). A compositionally biased stretch (basic and acidic residues) spans 968 to 977 (SETRIEHFGT).

This sequence belongs to the TRAFAC class myosin-kinesin ATPase superfamily. Kinesin family. KIN-7 subfamily.

The protein resides in the plastid. The protein localises to the chloroplast. This chain is Kinesin-like protein KIN-7L, chloroplastic, found in Arabidopsis thaliana (Mouse-ear cress).